Reading from the N-terminus, the 441-residue chain is Monodehydroascorbate reductase 3 (441 aa).

Residues Gly14–Ala17, Glu41, Arg48, Lys53, Ile96, and Arg147–Glu148 contribute to the FAD site. NAD(+)-binding positions include Gly173–Glu179, Glu197, Arg203, and Gly262. Residue Phe175 to Glu179 coordinates NADP(+). NADP(+) is bound by residues Arg203 and Gly262. Position 299 (Asp299) interacts with FAD. Glu315–His316 contributes to the NAD(+) binding site. Residue Glu315–His316 participates in NADP(+) binding. L-ascorbate is bound at residue Arg321. An FAD-binding site is contributed by Tyr350. Tyr350 contributes to the NAD(+) binding site. Residue Tyr350 participates in NADP(+) binding. Arg352 lines the L-ascorbate pocket. A Phosphoserine modification is found at Ser418.

The protein belongs to the FAD-dependent oxidoreductase family. Requires FAD as cofactor.

The protein resides in the cytoplasm. The enzyme catalyses 2 monodehydro-L-ascorbate radical + NADH + H(+) = 2 L-ascorbate + NAD(+). Catalyzes the conversion of monodehydroascorbate to ascorbate, oxidizing NADH in the process. Required for producing sufficient ascorbate to maintain the interaction between Piriformospora indica and Arabidopsis in a mutualistic state. The chain is Monodehydroascorbate reductase 3 from Arabidopsis thaliana (Mouse-ear cress).